Reading from the N-terminus, the 610-residue chain is MIEVLLVTICLAAFPYQGSSIILESGNVNDYEVVYPRKVTALPKGAVQPKYEDAMQYEFKVNGEPVVLHLEKNKGLFSKDYSETHYSPDGREITTYPAVEDHCYYHGRIENDADSTASISACNGLKGHFKLQRETYFIEPLKLSNSEAHAVFKYENVEKEDEAPKMCGVTQNWKSYEPIKKASQLVVTAEQQKYNPFRYVELFIVVDQGMVTKNNGDLDKIKARMYELANIVNEILRYLYMHAALVGLEIWSNGDKITVKPDVDYTLNSFAEWRKTDLLTRKKHDNAQLLTAIDFNGPTIGYAYIGSMCHPKRSVAIVEDYSPINLVVAVIMAHEMGHNLGIHHDTDFCSCGDYPCIMGPTISNEPSKFFSNCSYIQCWDFIMKENPQCILNEPLGTDIVSPPVCGNELLEVGEECDCGTPENCQNECCDAATCKLKSGSQCGHGDCCEQCKFSKSGTECRASMSECDPAEHCTGQSSECPADVFHKNGQPCLDNYGYCYNGNCPIMYHQCYALFGADVYEAEDSCFKDNQKGNYYGYCRKENGKKIPCAPEDVKCGRLYCKDNSPGQNNPCKMFYSNDDEHKGMVLPGTKCADGKVCSNGHCVDVATAY.

Positions 1-20 (MIEVLLVTICLAAFPYQGSS) are cleaved as a signal peptide. The propeptide occupies 21–191 (IILESGNVND…ASQLVVTAEQ (171 aa)). A Pyrrolidone carboxylic acid modification is found at Q192. The region spanning 198-394 (RYVELFIVVD…ENPQCILNEP (197 aa)) is the Peptidase M12B domain. Ca(2+)-binding residues include E201 and D285. Disulfide bonds link C309–C389, C349–C373, and C351–C356. H334 is a binding site for Zn(2+). E335 is a catalytic residue. Zn(2+) is bound by residues H338 and H344. N-linked (GlcNAc...) asparagine glycosylation occurs at N372. Residues C389, N392, V404, N407, L409, E411, E414, and D417 each contribute to the Ca(2+) site. The region spanning 402–488 (PPVCGNELLE…ECPADVFHKN (87 aa)) is the Disintegrin domain. 22 disulfide bridges follow: C405/C424, C405/C434, C416/C429, C416/C434, C418/C424, C428/C451, C442/C448, C447/C473, C460/C480, C467/C492, C467/C499, C492/C504, C499/C504, C511/C526, C511/C561, C526/C572, C539/C549, C549/C556, C556/C598, C561/C572, C592/C603, and C598/C603. A D/ECD-tripeptide motif is present at residues 466–468 (ECD). Ca(2+)-binding residues include D468, P469, E471, D483, and V484.

The protein belongs to the venom metalloproteinase (M12B) family. P-III subfamily. P-IIIb sub-subfamily. As to quaternary structure, monomer. Zn(2+) is required as a cofactor. Expressed by the venom gland.

It is found in the secreted. The catalysed reaction is Cleavage of 5-His-|-Leu-6, 10-His-|-Leu-11, 14-Ala-|-Leu-15, 16-Tyr-|-Leu-17 and 24-Phe-|-Phe-25 in insulin B chain.. Its activity is regulated as follows. Inhibited by EDTA and EGTA. Has caseinolytic activity. Causes hemorrhage on rabbit skin and causes myonecrosis in mouse tibialis anterior muscle. Functionally, inhibits platelet aggregation. This chain is Zinc metalloproteinase-disintegrin-like bothropasin, found in Bothrops jararaca (Jararaca).